We begin with the raw amino-acid sequence, 140 residues long: Thymic stromal lymphopoietin (140 aa).

The signal sequence occupies residues 1–19 (MVLLRSLFILQVLVRMGLT). Asn-21 and Asn-26 each carry an N-linked (GlcNAc...) asparagine glycan. 3 disulfides stabilise this stretch: Cys-25–Cys-98, Cys-57–Cys-63, and Cys-78–Cys-121. N-linked (GlcNAc...) asparagine glycosylation occurs at Asn-123.

As to quaternary structure, interacts with a receptor composed of CRLF2 and IL7R. Binding of TSLP to CRLF2/TSLPR is a mechanistic prerequisite for recruitment of IL7R to the high-affinity ternary complex.

It localises to the secreted. Its function is as follows. Cytokine that induces the release of T-cell-attracting chemokines from monocytes and, in particular, enhances the maturation of CD11c(+) dendritic cells. Can induce allergic inflammation by directly activating mast cells. The sequence is that of Thymic stromal lymphopoietin (Tslp) from Mus musculus (Mouse).